A 326-amino-acid polypeptide reads, in one-letter code: tRNA-dihydrouridine(16) synthase (326 aa).

FMN is bound by residues 8-10 (PME) and Q69. Catalysis depends on C99, which acts as the Proton donor. Residues K140, 200 to 202 (NGE), and 224 to 225 (GR) each bind FMN.

The protein belongs to the Dus family. DusC subfamily. It depends on FMN as a cofactor.

The enzyme catalyses 5,6-dihydrouridine(16) in tRNA + NADP(+) = uridine(16) in tRNA + NADPH + H(+). It catalyses the reaction 5,6-dihydrouridine(16) in tRNA + NAD(+) = uridine(16) in tRNA + NADH + H(+). Functionally, catalyzes the synthesis of 5,6-dihydrouridine (D), a modified base found in the D-loop of most tRNAs, via the reduction of the C5-C6 double bond in target uridines. Specifically modifies U16 in tRNAs. This Ralstonia nicotianae (strain ATCC BAA-1114 / GMI1000) (Ralstonia solanacearum) protein is tRNA-dihydrouridine(16) synthase.